We begin with the raw amino-acid sequence, 599 residues long: UvrABC system protein C (599 aa).

The region spanning 19–95 (ESTGVYIFYD…IKKYRPIMNV (77 aa)) is the GIY-YIG domain. The region spanning 206 to 241 (EEIIEKLYDQMQEYSKNLEFEKAAKIRDKIRLLQNL) is the UVR domain.

Belongs to the UvrC family. As to quaternary structure, interacts with UvrB in an incision complex.

Its subcellular location is the cytoplasm. In terms of biological role, the UvrABC repair system catalyzes the recognition and processing of DNA lesions. UvrC both incises the 5' and 3' sides of the lesion. The N-terminal half is responsible for the 3' incision and the C-terminal half is responsible for the 5' incision. The chain is UvrABC system protein C from Dictyoglomus thermophilum (strain ATCC 35947 / DSM 3960 / H-6-12).